The primary structure comprises 108 residues: Large ribosomal subunit protein uL23 (108 aa).

It belongs to the universal ribosomal protein uL23 family. As to quaternary structure, part of the 50S ribosomal subunit. Contacts protein L29, and trigger factor when it is bound to the ribosome.

One of the early assembly proteins it binds 23S rRNA. One of the proteins that surrounds the polypeptide exit tunnel on the outside of the ribosome. Forms the main docking site for trigger factor binding to the ribosome. The sequence is that of Large ribosomal subunit protein uL23 from Polaromonas naphthalenivorans (strain CJ2).